Here is a 469-residue protein sequence, read N- to C-terminus: 3-isopropylmalate dehydratase large subunit (469 aa).

Cysteine 350, cysteine 410, and cysteine 413 together coordinate [4Fe-4S] cluster.

This sequence belongs to the aconitase/IPM isomerase family. LeuC type 1 subfamily. As to quaternary structure, heterodimer of LeuC and LeuD. The cofactor is [4Fe-4S] cluster.

It catalyses the reaction (2R,3S)-3-isopropylmalate = (2S)-2-isopropylmalate. Its pathway is amino-acid biosynthesis; L-leucine biosynthesis; L-leucine from 3-methyl-2-oxobutanoate: step 2/4. In terms of biological role, catalyzes the isomerization between 2-isopropylmalate and 3-isopropylmalate, via the formation of 2-isopropylmaleate. The protein is 3-isopropylmalate dehydratase large subunit of Rhodopseudomonas palustris (strain TIE-1).